The sequence spans 203 residues: Urease accessory protein UreG (203 aa).

Gly-14–Thr-21 contributes to the GTP binding site.

This sequence belongs to the SIMIBI class G3E GTPase family. UreG subfamily. Homodimer. UreD, UreF and UreG form a complex that acts as a GTP-hydrolysis-dependent molecular chaperone, activating the urease apoprotein by helping to assemble the nickel containing metallocenter of UreC. The UreE protein probably delivers the nickel.

The protein localises to the cytoplasm. In terms of biological role, facilitates the functional incorporation of the urease nickel metallocenter. This process requires GTP hydrolysis, probably effectuated by UreG. This Allorhizobium ampelinum (strain ATCC BAA-846 / DSM 112012 / S4) (Agrobacterium vitis (strain S4)) protein is Urease accessory protein UreG.